The following is a 125-amino-acid chain: Ribosome-binding factor A (125 aa).

It belongs to the RbfA family. In terms of assembly, monomer. Binds 30S ribosomal subunits, but not 50S ribosomal subunits or 70S ribosomes.

The protein resides in the cytoplasm. Functionally, one of several proteins that assist in the late maturation steps of the functional core of the 30S ribosomal subunit. Associates with free 30S ribosomal subunits (but not with 30S subunits that are part of 70S ribosomes or polysomes). Required for efficient processing of 16S rRNA. May interact with the 5'-terminal helix region of 16S rRNA. The polypeptide is Ribosome-binding factor A (Akkermansia muciniphila (strain ATCC BAA-835 / DSM 22959 / JCM 33894 / BCRC 81048 / CCUG 64013 / CIP 107961 / Muc)).